Consider the following 184-residue polypeptide: Large ribosomal subunit protein uL6 (184 aa).

This sequence belongs to the universal ribosomal protein uL6 family. As to quaternary structure, part of the 50S ribosomal subunit.

In terms of biological role, this protein binds to the 23S rRNA, and is important in its secondary structure. It is located near the subunit interface in the base of the L7/L12 stalk, and near the tRNA binding site of the peptidyltransferase center. This is Large ribosomal subunit protein uL6 from Pyrococcus abyssi (strain GE5 / Orsay).